We begin with the raw amino-acid sequence, 381 residues long: Queuine tRNA-ribosyltransferase (381 aa).

The active-site Proton acceptor is the Asp92. Substrate-binding positions include 92–96, Asp146, Gln190, and Gly217; that span reads DSGGF. Residues 248–254 form an RNA binding region; sequence GVGRPED. The active-site Nucleophile is the Asp267. The interval 272–276 is RNA binding; important for wobble base 34 recognition; sequence TRNAR. Zn(2+)-binding residues include Cys305, Cys307, Cys310, and His337.

Belongs to the queuine tRNA-ribosyltransferase family. Homodimer. Within each dimer, one monomer is responsible for RNA recognition and catalysis, while the other monomer binds to the replacement base PreQ1. It depends on Zn(2+) as a cofactor.

It carries out the reaction 7-aminomethyl-7-carbaguanine + guanosine(34) in tRNA = 7-aminomethyl-7-carbaguanosine(34) in tRNA + guanine. The protein operates within tRNA modification; tRNA-queuosine biosynthesis. In terms of biological role, catalyzes the base-exchange of a guanine (G) residue with the queuine precursor 7-aminomethyl-7-deazaguanine (PreQ1) at position 34 (anticodon wobble position) in tRNAs with GU(N) anticodons (tRNA-Asp, -Asn, -His and -Tyr). Catalysis occurs through a double-displacement mechanism. The nucleophile active site attacks the C1' of nucleotide 34 to detach the guanine base from the RNA, forming a covalent enzyme-RNA intermediate. The proton acceptor active site deprotonates the incoming PreQ1, allowing a nucleophilic attack on the C1' of the ribose to form the product. After dissociation, two additional enzymatic reactions on the tRNA convert PreQ1 to queuine (Q), resulting in the hypermodified nucleoside queuosine (7-(((4,5-cis-dihydroxy-2-cyclopenten-1-yl)amino)methyl)-7-deazaguanosine). The chain is Queuine tRNA-ribosyltransferase from Xanthomonas campestris pv. campestris (strain 8004).